Reading from the N-terminus, the 166-residue chain is Putative tRNA (cytidine(34)-2'-O)-methyltransferase (166 aa).

4 residues coordinate S-adenosyl-L-methionine: Leu83, Gly109, Ile130, and Ser138.

It belongs to the class IV-like SAM-binding methyltransferase superfamily. RNA methyltransferase TrmH family. TrmL subfamily.

The protein localises to the cytoplasm. The catalysed reaction is cytidine(34) in tRNA + S-adenosyl-L-methionine = 2'-O-methylcytidine(34) in tRNA + S-adenosyl-L-homocysteine + H(+). It catalyses the reaction 5-carboxymethylaminomethyluridine(34) in tRNA(Leu) + S-adenosyl-L-methionine = 5-carboxymethylaminomethyl-2'-O-methyluridine(34) in tRNA(Leu) + S-adenosyl-L-homocysteine + H(+). Could methylate the ribose at the nucleotide 34 wobble position in tRNA. This Mycoplasma genitalium (strain ATCC 33530 / DSM 19775 / NCTC 10195 / G37) (Mycoplasmoides genitalium) protein is Putative tRNA (cytidine(34)-2'-O)-methyltransferase.